The sequence spans 334 residues: Fructose-1,6-bisphosphatase class 1 2 (334 aa).

Mg(2+)-binding residues include E92, D114, L116, and D117. Residues 117-120 (DGSS), N208, and K274 each bind substrate. E280 is a binding site for Mg(2+).

It belongs to the FBPase class 1 family. As to quaternary structure, homotetramer. The cofactor is Mg(2+).

It is found in the cytoplasm. The enzyme catalyses beta-D-fructose 1,6-bisphosphate + H2O = beta-D-fructose 6-phosphate + phosphate. The protein operates within carbohydrate biosynthesis; gluconeogenesis. In Albidiferax ferrireducens (strain ATCC BAA-621 / DSM 15236 / T118) (Rhodoferax ferrireducens), this protein is Fructose-1,6-bisphosphatase class 1 2.